Here is a 217-residue protein sequence, read N- to C-terminus: Adapter protein MecA (217 aa).

It belongs to the MecA family. As to quaternary structure, homodimer.

Its function is as follows. Enables the recognition and targeting of unfolded and aggregated proteins to the ClpC protease or to other proteins involved in proteolysis. The sequence is that of Adapter protein MecA from Listeria monocytogenes serovar 1/2a (strain ATCC BAA-679 / EGD-e).